The chain runs to 201 residues: Small ribosomal subunit protein uS4c (201 aa).

The interval 15–43 (LGALPGLTSKRPRSGSDLRNQSRSGKRSQ) is disordered. An S4 RNA-binding domain is found at 89 to 150 (MRLDNILFRL…KERSRALIQN (62 aa)).

This sequence belongs to the universal ribosomal protein uS4 family. As to quaternary structure, part of the 30S ribosomal subunit. Contacts protein S5. The interaction surface between S4 and S5 is involved in control of translational fidelity.

It localises to the plastid. It is found in the chloroplast. In terms of biological role, one of the primary rRNA binding proteins, it binds directly to 16S rRNA where it nucleates assembly of the body of the 30S subunit. Functionally, with S5 and S12 plays an important role in translational accuracy. In Amborella trichopoda, this protein is Small ribosomal subunit protein uS4c (rps4).